The primary structure comprises 655 residues: Fidgetin-like protein 1 (655 aa).

A disordered region spans residues 289-313 (QQKKHSNQPQRNPGPLYGGGKKSLG). ATP-binding positions include alanine 385 and 425–430 (GTGKTL).

Belongs to the AAA ATPase family. In terms of assembly, hexamer. Mg(2+) is required as a cofactor.

It is found in the nucleus. The protein resides in the cytoplasm. Its subcellular location is the perinuclear region. It catalyses the reaction ATP + H2O = ADP + phosphate + H(+). Its function is as follows. May be involved in DNA double-strand break (DBS) repair via homologous recombination (HR). May regulate osteoblast proliferation and differentiation. The polypeptide is Fidgetin-like protein 1 (fignl1) (Xenopus laevis (African clawed frog)).